The chain runs to 241 residues: Uridylate kinase (241 aa).

12–15 contacts ATP; the sequence is KLSG. The tract at residues 20–25 is involved in allosteric activation by GTP; sequence GDKGVG. Gly-54 lines the UMP pocket. 2 residues coordinate ATP: Gly-55 and Arg-59. Residues Asp-74 and 135-142 contribute to the UMP site; that span reads IGSPYFST. ATP contacts are provided by Asn-163, Tyr-169, and Asp-172.

It belongs to the UMP kinase family. In terms of assembly, homohexamer.

The protein resides in the cytoplasm. It catalyses the reaction UMP + ATP = UDP + ADP. Its pathway is pyrimidine metabolism; CTP biosynthesis via de novo pathway; UDP from UMP (UMPK route): step 1/1. With respect to regulation, allosterically activated by GTP. Inhibited by UTP. In terms of biological role, catalyzes the reversible phosphorylation of UMP to UDP. This Streptococcus gordonii (strain Challis / ATCC 35105 / BCRC 15272 / CH1 / DL1 / V288) protein is Uridylate kinase.